Consider the following 786-residue polypeptide: Pheromone-regulated membrane protein 10 (786 aa).

The segment covering 1-28 (MADSGDKDVSKSVRFDKESIESKKRSSV) has biased composition (basic and acidic residues). 2 disordered regions span residues 1 to 65 (MADS…EDGN) and 77 to 103 (NGGA…DNDN). Low complexity predominate over residues 29 to 42 (DDSASSYSSSSSGQ). 10 helical membrane-spanning segments follow: residues 469–489 (WVCV…AFGG), 491–511 (WINL…QFIL), 521–541 (VFEI…GSIP), 545–565 (ICFG…YIIL), 584–604 (FYAI…AALF), 620–640 (PISP…ISLI), 645–665 (WTQL…TYWS), 675–695 (FTAA…SRIW), 697–717 (GLAV…GIAS), and 751–771 (FGIT…ASTL).

This sequence belongs to the ThrE exporter (TC 2.A.79) family.

It is found in the membrane. The sequence is that of Pheromone-regulated membrane protein 10 from Candida glabrata (strain ATCC 2001 / BCRC 20586 / JCM 3761 / NBRC 0622 / NRRL Y-65 / CBS 138) (Yeast).